Here is a 236-residue protein sequence, read N- to C-terminus: Purine nucleoside phosphorylase DeoD-type (236 aa).

Residue His5 coordinates a purine D-ribonucleoside. Phosphate contacts are provided by residues Gly21, Arg25, Arg44, and Arg88–Thr91. A purine D-ribonucleoside contacts are provided by residues Glu180–Glu182 and Ser204–Asp205. Asp205 functions as the Proton donor in the catalytic mechanism.

This sequence belongs to the PNP/UDP phosphorylase family. Homohexamer; trimer of homodimers.

It carries out the reaction a purine D-ribonucleoside + phosphate = a purine nucleobase + alpha-D-ribose 1-phosphate. The catalysed reaction is a purine 2'-deoxy-D-ribonucleoside + phosphate = a purine nucleobase + 2-deoxy-alpha-D-ribose 1-phosphate. In terms of biological role, catalyzes the reversible phosphorolytic breakdown of the N-glycosidic bond in the beta-(deoxy)ribonucleoside molecules, with the formation of the corresponding free purine bases and pentose-1-phosphate. The chain is Purine nucleoside phosphorylase DeoD-type from Shewanella sp. (strain MR-4).